A 197-amino-acid chain; its full sequence is Ribosomal RNA large subunit methyltransferase E (197 aa).

Residues G50, W52, D67, D83, and D111 each coordinate S-adenosyl-L-methionine. K151 acts as the Proton acceptor in catalysis.

This sequence belongs to the class I-like SAM-binding methyltransferase superfamily. RNA methyltransferase RlmE family.

The protein localises to the cytoplasm. The enzyme catalyses uridine(2552) in 23S rRNA + S-adenosyl-L-methionine = 2'-O-methyluridine(2552) in 23S rRNA + S-adenosyl-L-homocysteine + H(+). Specifically methylates the uridine in position 2552 of 23S rRNA at the 2'-O position of the ribose in the fully assembled 50S ribosomal subunit. The polypeptide is Ribosomal RNA large subunit methyltransferase E (Thermoplasma volcanium (strain ATCC 51530 / DSM 4299 / JCM 9571 / NBRC 15438 / GSS1)).